A 770-amino-acid chain; its full sequence is U3 small nucleolar RNA-associated protein 14 homolog A (770 aa).

Residues 1-17 (MNANQAAESNLLASNQQ) are compositionally biased toward polar residues. A disordered region spans residues 1–65 (MNANQAAESN…GKDRQKLADR (65 aa)). Phosphoserine is present on residues Ser-30, Ser-32, and Ser-53. A coiled-coil region spans residues 41-68 (ERKHQKLLESISSLNGKDRQKLADRSEA). Residues 56 to 65 (GKDRQKLADR) are compositionally biased toward basic and acidic residues. Ser-78 and Ser-82 each carry phosphoserine. Thr-206 is subject to Phosphothreonine. Coiled coils occupy residues 217–291 (SLEE…DKAR) and 318–348 (LEAR…EEEG). Disordered regions lie at residues 334–361 (LTQK…LVPD), 392–455 (KDLE…SSQE), and 467–505 (LRTE…RPER). 2 stretches are compositionally biased toward acidic residues: residues 343–358 (ESEE…EEPL) and 396–410 (DPAE…ESEE). Phosphoserine occurs at positions 406 and 408. A compositionally biased stretch (basic and acidic residues) spans 411 to 444 (EKAVVEEETLLKEFEERRSLRQKSELNHMAEPVH). A Glycyl lysine isopeptide (Lys-Gly) (interchain with G-Cter in SUMO2) cross-link involves residue Lys-449. Ser-453 bears the Phosphoserine mark. Ser-567 carries the post-translational modification Phosphoserine. Residue Arg-588 is modified to Citrulline. Residue Lys-732 forms a Glycyl lysine isopeptide (Lys-Gly) (interchain with G-Cter in SUMO2) linkage.

It belongs to the UTP14 family. In terms of assembly, interacts with DHX37. Citrullinated by PADI4.

The protein localises to the nucleus. Its subcellular location is the nucleolus. In terms of biological role, may be required for ribosome biogenesis. This is U3 small nucleolar RNA-associated protein 14 homolog A (UTP14A) from Bos taurus (Bovine).